The sequence spans 417 residues: SNF1 protein kinase subunit beta-3 (417 aa).

Positions 1–12 are enriched in basic and acidic residues; sequence MAGDNPENKDAS. The tract at residues 1 to 37 is disordered; that stretch reads MAGDNPENKDASMLDVSDAASNTTINGKHSADSTNEA. Residues Ser12, Ser21, Ser44, and Ser135 each carry the phosphoserine modification. Over residues 19-37 the composition is skewed to polar residues; sequence AASNTTINGKHSADSTNEA. 2 disordered regions span residues 64–155 and 250–269; these read SSLI…VEGK and GNEP…DDSK. A compositionally biased stretch (polar residues) spans 118–136; that stretch reads TGNTLQKMDYQPSQQPDSL. Positions 137-149 are enriched in low complexity; it reads QNQGFQQQQEQQQ. A kinase-interacting sequence (KIS); required for interaction with SNF1 region spans residues 152-342; the sequence is VEGKKGRAMM…DQQQNNHQNM (191 aa). The segment covering 257 to 269 has biased composition (basic and acidic residues); that stretch reads LAEKKANHVDDSK. A phosphoserine mark is found at Ser276 and Ser279. Positions 343 to 417 are association with SNF1 kinase complex (ASC) domain; required for interaction with SNF4; that stretch reads AWLTPPQLPP…VTQILYTPLQ (75 aa).

This sequence belongs to the 5'-AMP-activated protein kinase beta subunit family. In terms of assembly, component of the SNF1 kinase complex, a heterotrimeric complex composed of the catalytic alpha subunit SNF1, one of the three related beta subunits SIP1, SIP2 or GAL83, and the regulatory gamma subunit SNF4. The beta subunit serves as a bridge between the catalytic and the regulatory subunit. Interacts (via KIS domain) with SNF1. Interacts (via ASC domain) with SNF4. Interacts with REE1. Post-translationally, phosphorylated by SNF1 in vitro.

It localises to the cytoplasm. The protein resides in the nucleus. In terms of biological role, beta subunit of the SNF1 kinase complex, which is required for transcriptional, metabolic, and developmental adaptations in response to glucose limitation. Has a structural role, mediating heterotrimer formation, and a regulatory role, defining carbon source-regulated subcellular location and substrate specificity of the SNF1 kinase complex. Promotes the relocalization of the SNF1 kinase complex to the nucleus upon shift to nonfermentable carbon sources. In Saccharomyces cerevisiae (strain ATCC 204508 / S288c) (Baker's yeast), this protein is SNF1 protein kinase subunit beta-3 (GAL83).